Reading from the N-terminus, the 191-residue chain is NF-kappa-B inhibitor-interacting Ras-like protein 2 (191 aa).

The segment at 1–191 (MGKSCKVVVC…KNKGSGSLDG (191 aa)) is small GTPase-like. Residue 11–18 (GQASVGKT) coordinates GTP. The Effector region motif lies at 35–43 (MIETQEDIY). GTP contacts are provided by residues 61–65 (DTRGL) and 120–123 (NKCD). A disordered region spans residues 169 to 191 (TQPQSKSAFPLSRKNKGSGSLDG).

The protein belongs to the small GTPase superfamily. Ras family. KappaB-Ras subfamily. As to quaternary structure, interacts with both NF-kappa-B inhibitor alpha (NFKBIA) and beta (NFKBIB) in vitro. However, it probably only interacts with NFKBIB in vivo. Interacts with GFOD1.

Its subcellular location is the cytoplasm. Its function is as follows. Atypical Ras-like protein that acts as a potent regulator of NF-kappa-B activity by preventing the degradation of NF-kappa-B inhibitor beta (NFKBIB) by most signals, explaining why NFKBIB is more resistant to degradation. May act by blocking phosphorylation of NFKBIB and nuclear localization of p65/RELA NF-kappa-B subunit. It is unclear whether it acts as a GTPase. Both GTP- and GDP-bound forms block phosphorylation of NFKBIB. The sequence is that of NF-kappa-B inhibitor-interacting Ras-like protein 2 (Nkiras2) from Mus musculus (Mouse).